A 393-amino-acid polypeptide reads, in one-letter code: tRNA(Met) cytidine acetate ligase (393 aa).

Gly-81, Asn-142, and Arg-167 together coordinate ATP.

This sequence belongs to the TmcAL family.

It is found in the cytoplasm. It catalyses the reaction cytidine(34) in elongator tRNA(Met) + acetate + ATP = N(4)-acetylcytidine(34) in elongator tRNA(Met) + AMP + diphosphate. Catalyzes the formation of N(4)-acetylcytidine (ac(4)C) at the wobble position of elongator tRNA(Met), using acetate and ATP as substrates. First activates an acetate ion to form acetyladenylate (Ac-AMP) and then transfers the acetyl group to tRNA to form ac(4)C34. The protein is tRNA(Met) cytidine acetate ligase of Bacillus cereus (strain 03BB102).